The primary structure comprises 246 residues: 1-(5-phosphoribosyl)-5-[(5-phosphoribosylamino)methylideneamino] imidazole-4-carboxamide isomerase (246 aa).

D7 serves as the catalytic Proton acceptor. The Proton donor role is filled by D129.

Belongs to the HisA/HisF family.

The protein localises to the cytoplasm. It catalyses the reaction 1-(5-phospho-beta-D-ribosyl)-5-[(5-phospho-beta-D-ribosylamino)methylideneamino]imidazole-4-carboxamide = 5-[(5-phospho-1-deoxy-D-ribulos-1-ylimino)methylamino]-1-(5-phospho-beta-D-ribosyl)imidazole-4-carboxamide. It participates in amino-acid biosynthesis; L-histidine biosynthesis; L-histidine from 5-phospho-alpha-D-ribose 1-diphosphate: step 4/9. The polypeptide is 1-(5-phosphoribosyl)-5-[(5-phosphoribosylamino)methylideneamino] imidazole-4-carboxamide isomerase (Buchnera aphidicola subsp. Acyrthosiphon pisum (strain Tuc7)).